The primary structure comprises 465 residues: Putative F-box/FBD/LRR-repeat protein At1g22000 (465 aa).

The F-box domain occupies 28–74; it reads ETRICALPDDLLLQILPHVPTKEAVATSILSKQWRYVWLMLPKLEFK. 5 LRR repeats span residues 154–181, 182–207, 210–230, 248–273, and 339–365; these read CLTLSNQILVDVSSPASLPSLLDLSLHY, VVYKDDGSLVRLLSSSPVLKRLSVHS, DDNLKTFTVKVSSLESLNYDE, NEVEVDDLNGSLVIDSPALKELHLSE, and ISLVDWLMPLMFLLQNSPKLKTPTIDN. Residues 373–424 form the FBD domain; sequence SWNQPSSIPGCLLSHLETFRWRGYGGREDAKKLLMTYILANSKCLKTVEISL.

This chain is Putative F-box/FBD/LRR-repeat protein At1g22000, found in Arabidopsis thaliana (Mouse-ear cress).